The primary structure comprises 95 residues: uncharacterized protein (95 aa).

The interval 65-95 (DANDYDTTTTEEEDSSTTTTTDNETNSDDDI) is disordered.

This is an uncharacterized protein from Lymantria dispar multicapsid nuclear polyhedrosis virus (LdMNPV).